The sequence spans 83 residues: UPF0729 protein CBG02799 (83 aa).

The disordered stretch occupies residues 51–83 (QEKKEEEEEKEKSCCSTEAENTTEVTTETKKDQ). Residues 67-76 (TEAENTTEVT) show a composition bias toward low complexity.

This sequence belongs to the UPF0729 family.

This chain is UPF0729 protein CBG02799, found in Caenorhabditis briggsae.